A 191-amino-acid polypeptide reads, in one-letter code: Large ribosomal subunit protein uL29m (191 aa).

The protein belongs to the universal ribosomal protein uL29 family. Component of the mitochondrial large ribosomal subunit. Mature mitochondrial ribosomes consist of a small (37S) and a large (54S) subunit. The 37S subunit contains at least 33 different proteins and 1 molecule of RNA (15S). The 54S subunit contains at least 45 different proteins and 1 molecule of RNA (21S).

It localises to the mitochondrion. This Sclerotinia sclerotiorum (strain ATCC 18683 / 1980 / Ss-1) (White mold) protein is Large ribosomal subunit protein uL29m (MRPL4).